The sequence spans 547 residues: Chaperonin GroEL (547 aa).

ATP is bound by residues 30–33 (TLGP), lysine 51, 87–91 (DGTTT), glycine 415, and aspartate 496. A disordered region spans residues 527–547 (SDKEEPMPMRGGMGGMGGMDF). A compositionally biased stretch (gly residues) spans 537–547 (GGMGGMGGMDF).

It belongs to the chaperonin (HSP60) family. Forms a cylinder of 14 subunits composed of two heptameric rings stacked back-to-back. Interacts with the co-chaperonin GroES.

The protein localises to the cytoplasm. It carries out the reaction ATP + H2O + a folded polypeptide = ADP + phosphate + an unfolded polypeptide.. Its function is as follows. Together with its co-chaperonin GroES, plays an essential role in assisting protein folding. The GroEL-GroES system forms a nano-cage that allows encapsulation of the non-native substrate proteins and provides a physical environment optimized to promote and accelerate protein folding. The protein is Chaperonin GroEL of Rickettsia massiliae (strain Mtu5).